The sequence spans 330 residues: Phosphate acyltransferase (330 aa).

This sequence belongs to the PlsX family. Homodimer. Probably interacts with PlsY.

Its subcellular location is the cytoplasm. The catalysed reaction is a fatty acyl-[ACP] + phosphate = an acyl phosphate + holo-[ACP]. It participates in lipid metabolism; phospholipid metabolism. Functionally, catalyzes the reversible formation of acyl-phosphate (acyl-PO(4)) from acyl-[acyl-carrier-protein] (acyl-ACP). This enzyme utilizes acyl-ACP as fatty acyl donor, but not acyl-CoA. This Bacillus cytotoxicus (strain DSM 22905 / CIP 110041 / 391-98 / NVH 391-98) protein is Phosphate acyltransferase.